A 1176-amino-acid polypeptide reads, in one-letter code: MSGFSLSEYLTKFQTTDRESYPRLQDPSRELNVIIDQLAVSPEQIDASPDSLEALIDLCHDFPHLTPKLQTQLSYLISSSLSNLSKDIKANLSSNVNFTEIGGLIPQWKRHLEEYGYLIQVLLTFLQDELHKVSSQSTNLNRSAKNSKNDSANVELFKRDCNQMENLLESITKLLEINLSKIFQTTPEKDLFIGLFTRPLFVLLEIEPVTKVSSLKMFIQRILAMCVKNHGQSSSIQSSLMTNLTYFLHLSVFNAELLKLLNDEYNYPQLTEDILKEISTRVFNAKDTTGPKAISNFLIKLSELSPGIMLRQMNLVITLLNNSSITLRCSVVEACGNIVAELAQDPQTMEHYKQQIAVLIELLEERFQDSNPYVRTKAIQGCSKICDLSSKFNKSKAKFTSLAVRSLQDRSSLVRRNSVKLLSKLLLKHPFKAIHGSQLRLSEWEEYLKGSESQLNSTLKKVESQETLNDTIERSLIEEEVEQDEGQCRTELEGSFNKSAELSRIENEVENINATNTSVLMKLKLMIVYYKDAISFIKEIHKSIELISNLLFSKNRNEVLESMDFLVLADAFDIELSEFGIKKMLHLVWMKGTNDEGTSISVHLIECYKQLFLTAPDSCNMQEKAAHIAKNLINLSIGASIADLASLEQLLGMMYEQKLIDQHVINILWAIYNSASKASMQKEQNVNNRDSEKGFSKEQIHGSIIILGMLSLADNEIALKGLESLLNIGLGAVGLKDLTLCRYSCLALERMVPKRSTIITKAINQELEDVAVKKLYAIIINYTKDNEYYPMCEQALSALFTISSKPDILATDLIREKTMMTFGKPEEEDSILSLEQSSRVVSLSQLLFIVGQVAIKTLVYLEKCEAEFKKRKIEAETRNGKVKNQGADVTNTTQDNGGDKELEMIGGTNEDDFTDAIQFVKENELLFGEKSILGKFCPIVEEIVSNSSRFSDPMLQRTATLCLEKLMCLSSKYCEKSLPLLITVMEKSPDPTIRSNAVLGLGDMAVCFNNLVDENTDYLYRRLHDENLMVQRTCLMTVTFLILAGQVKVKGQLGEMAKCLDNPDQGISDMCRLFFTELASKDNAIYNGFIDIFSNLSSDDLLGKESFKKIIKFLLTFIDKERHQKQLNEKLVGRLRKCETQKQWDDIAFVLNNLPYKNEDVTALLEQGFKVVSAKE.

A phosphoserine mark is found at Ser464 and Ser475.

It belongs to the CND1 (condensin subunit 1) family. In terms of assembly, component of the condensin complex, which contains the SMC2 and SMC4 heterodimer, and three non SMC subunits that probably regulate the complex: BRN1, YCS4 and YCG1/YCS5.

It localises to the nucleus. Its subcellular location is the chromosome. In terms of biological role, regulatory subunit of the condensin complex, a complex required for conversion of interphase chromatin into mitotic-like condense chromosomes. The condensin complex probably introduces positive supercoils into relaxed DNA in the presence of type I topoisomerases and converts nicked DNA into positive knotted forms in the presence of type II topoisomerases. The condensin complex probably also plays a role during interphase. This is Condensin complex subunit 1 (YCS4) from Saccharomyces cerevisiae (strain ATCC 204508 / S288c) (Baker's yeast).